Consider the following 436-residue polypeptide: Testis-expressed protein 44 (436 aa).

Acidic residues-rich tracts occupy residues Met-1–Glu-10 and Leu-45–Ile-54. 2 disordered regions span residues Met-1–Leu-142 and Ala-165–Gly-307. 2 stretches are compositionally biased toward polar residues: residues Ala-81–Ser-103 and Asn-167–Glu-195. Positions Glu-234–Lys-247 are enriched in basic and acidic residues. Pro residues predominate over residues Gln-273–Pro-289. Ser-375 is modified (phosphoserine).

The protein resides in the cytoplasm. The chain is Testis-expressed protein 44 (Tex44) from Rattus norvegicus (Rat).